We begin with the raw amino-acid sequence, 188 residues long: UPF0301 protein PD_1276 (188 aa).

It belongs to the UPF0301 (AlgH) family.

The polypeptide is UPF0301 protein PD_1276 (Xylella fastidiosa (strain Temecula1 / ATCC 700964)).